The following is a 699-amino-acid chain: Elongation factor G (699 aa).

Positions 8 to 288 constitute a tr-type G domain; that stretch reads EDYRNFGIMA…AVVDYLPSPV (281 aa). Residues 17–24, 86–90, and 140–143 contribute to the GTP site; these read AHIDAGKT, DTPGH, and NKMD.

This sequence belongs to the TRAFAC class translation factor GTPase superfamily. Classic translation factor GTPase family. EF-G/EF-2 subfamily.

Its subcellular location is the cytoplasm. In terms of biological role, catalyzes the GTP-dependent ribosomal translocation step during translation elongation. During this step, the ribosome changes from the pre-translocational (PRE) to the post-translocational (POST) state as the newly formed A-site-bound peptidyl-tRNA and P-site-bound deacylated tRNA move to the P and E sites, respectively. Catalyzes the coordinated movement of the two tRNA molecules, the mRNA and conformational changes in the ribosome. This Sinorhizobium medicae (strain WSM419) (Ensifer medicae) protein is Elongation factor G.